Here is a 134-residue protein sequence, read N- to C-terminus: DNA polymerase III subunit psi (134 aa).

It belongs to the DNA polymerase III psi/HolD chain family. In terms of assembly, DNA polymerase III contains a core (composed of alpha, epsilon and theta chains) that associates with a tau subunit. This core dimerizes to form the POLIII' complex. PolIII' associates with the gamma complex (composed of gamma, delta, delta', psi and chi chains) and with the beta chain to form the complete DNA polymerase III complex. Interacts directly with the chi subunit (holC).

It carries out the reaction DNA(n) + a 2'-deoxyribonucleoside 5'-triphosphate = DNA(n+1) + diphosphate. In terms of biological role, part of the beta sliding clamp loading complex, which hydrolyzes ATP to load the beta clamp onto primed DNA to form the DNA replication pre-initiation complex. DNA polymerase III is a complex, multichain enzyme responsible for most of the replicative synthesis in bacteria. This DNA polymerase also exhibits 3' to 5' exonuclease activity. This chain is DNA polymerase III subunit psi (holD), found in Haemophilus influenzae (strain ATCC 51907 / DSM 11121 / KW20 / Rd).